The following is a 111-amino-acid chain: Cytochrome c6 (111 aa).

An N-terminal signal peptide occupies residues Met-1–Ala-25. Heme c is bound by residues Cys-39, Cys-42, His-43, and Met-83.

Belongs to the cytochrome c family. PetJ subfamily. In terms of assembly, monomer. Binds 1 heme c group covalently per subunit.

The protein localises to the cellular thylakoid lumen. Its function is as follows. Functions as an electron carrier between membrane-bound cytochrome b6-f and photosystem I in oxygenic photosynthesis. This is Cytochrome c6 from Rippkaea orientalis (strain PCC 8801 / RF-1) (Cyanothece sp. (strain PCC 8801)).